A 558-amino-acid chain; its full sequence is ATP synthase subunit alpha (558 aa).

172-179 (GDRKTGKT) serves as a coordination point for ATP. A disordered region spans residues 536-558 (ESVKVHQAIPAKTSEKSKNSTPR). A compositionally biased stretch (basic and acidic residues) spans 548-558 (TSEKSKNSTPR).

This sequence belongs to the ATPase alpha/beta chains family. F-type ATPases have 2 components, CF(1) - the catalytic core - and CF(0) - the membrane proton channel. CF(1) has five subunits: alpha(3), beta(3), gamma(1), delta(1), epsilon(1). CF(0) has three main subunits: a(1), b(2) and c(9-12). The alpha and beta chains form an alternating ring which encloses part of the gamma chain. CF(1) is attached to CF(0) by a central stalk formed by the gamma and epsilon chains, while a peripheral stalk is formed by the delta and b chains.

It is found in the cell membrane. The catalysed reaction is ATP + H2O + 4 H(+)(in) = ADP + phosphate + 5 H(+)(out). Its function is as follows. Produces ATP from ADP in the presence of a proton gradient across the membrane. The alpha chain is a regulatory subunit. This Mycobacterium leprae (strain Br4923) protein is ATP synthase subunit alpha.